A 196-amino-acid chain; its full sequence is Guanylate kinase (196 aa).

The interval 1 to 24 (MPVESGAGNDQPKRLTVLSGPSGV) is disordered. The Guanylate kinase-like domain occupies 13–191 (KRLTVLSGPS…VCDELLALIA (179 aa)). 20–27 (GPSGVGKS) provides a ligand contact to ATP.

The protein belongs to the guanylate kinase family.

The protein resides in the cytoplasm. The enzyme catalyses GMP + ATP = GDP + ADP. Functionally, essential for recycling GMP and indirectly, cGMP. This chain is Guanylate kinase, found in Thermobifida fusca (strain YX).